We begin with the raw amino-acid sequence, 151 residues long: Multiprotein-bridging factor 1 (151 aa).

The disordered stretch occupies residues 1 to 31 (MSDWESHTVIGQKARAGGSGPRANVARTQGQ). The 55-residue stretch at 85 to 139 (IARVRTEKKMSQKDLATKINEKPTVINDYEAGRAIPNQQVLGKMERALGVKLRGK) folds into the HTH cro/C1-type domain. A DNA-binding region (H-T-H motif) is located at residues 96 to 115 (QKDLATKINEKPTVINDYEA).

Belongs to the MBF1 family.

Functionally, transcriptional coactivator that stimulates GCN4-dependent transcriptional activity by bridging the DNA-binding region of GCN4 and TBP (SPT15), thereby recruiting TBP to GCN4-bound promoters. Involved in induction of the ribosome quality control (RQC) pathway; a pathway that degrades nascent peptide chains during problematic translation. Required to prevent stalled ribosomes from frameshifting. This chain is Multiprotein-bridging factor 1 (MBF1), found in Candida glabrata (strain ATCC 2001 / BCRC 20586 / JCM 3761 / NBRC 0622 / NRRL Y-65 / CBS 138) (Yeast).